An 876-amino-acid polypeptide reads, in one-letter code: SED5-binding protein 2 (876 aa).

The residue at position 51 (S51) is a Phosphoserine. Positions 164–189 (CRRCRSYMNPFVVFINQGRKWQCNIC) are zinc finger-like. Residues 300–324 (VSDEDDEESDGEEEDEDEEEEDVDN) are compositionally biased toward acidic residues. Residues 300–326 (VSDEDDEESDGEEEDEDEEEEDVDNSE) form a disordered region.

Belongs to the SEC23/SEC24 family. SEC24 subfamily. COPII is composed of at least five proteins: the SEC23/24 complex, the SEC13/31 complex and SAR1. Interacts with GRH1.

The protein resides in the cytoplasm. It is found in the golgi apparatus membrane. Its subcellular location is the endoplasmic reticulum membrane. Its function is as follows. Component of the COPII coat, that covers ER-derived vesicles involved in transport from the endoplasmic reticulum to the Golgi apparatus. COPII acts in the cytoplasm to promote the transport of secretory, plasma membrane, and vacuolar proteins from the endoplasmic reticulum to the Golgi complex. This Saccharomyces cerevisiae (strain ATCC 204508 / S288c) (Baker's yeast) protein is SED5-binding protein 2 (SFB2).